Here is a 493-residue protein sequence, read N- to C-terminus: Cytochrome P450 monooxygenase mfmF (493 aa).

A run of 2 helical transmembrane segments spans residues 3–23 (SLIP…RLFF) and 301–321 (VLFA…FHLV). Cys-440 lines the heme pocket.

It belongs to the cytochrome P450 family. The cofactor is heme.

The protein resides in the membrane. The protein operates within secondary metabolite biosynthesis; terpenoid biosynthesis. Its function is as follows. Cytochrome P450 monooxygenase; part of the gene cluster that mediates the biosynthesis of the phthalide-terpenoid hybrid 11'-O-desmethylfendlerol. Within the pathway, mfmF catalyzes C-3 hydroxylation of 5-hydroxy-4-(hydroxymethyl)-7-methoxy-6-methylphthalide to yield cyclopolic acid. The biosynthesis of 11'-O-desmethylfendlerol begins with the NR-PKS mfmB that forms 3,5-dimethylorsellinic acid (DMOA), which is then transformed into the phthalide 5,7-dihydroxy-4-(hydroxymethyl)-6-methylphthalide by the cytochrome P450 monooxygenase mfmA and the hydrolase mfmC. Subsequently, the methyltransferase mfmE catalyzes 7-O-methylation to yield 5-hydroxy-4-(hydroxymethyl)-7-methoxy-6-methylphthalide, which undergoes C-3 hydroxylation by the cytochrome P450 monooxygenase mfmF. The resultant cyclopolic acid (2,5-dihydroxy-4-(hydroxymethyl)-7-methoxy-6-methylphthalide) is then farnesylated by the DMATS-type prenyltransferase mfmD to afford 5-O-farnesylcyclopolic acid. Finally, the Pyr4-family terpene cyclase mfmH cyclizes the farnesyl moiety of 5-O-farnesylcyclopolic acid into a drimane-like structure, thus completing the biosynthesis of 11'-O-desmethylfendlerol. In Annulohypoxylon moriforme (Filamentous fungus), this protein is Cytochrome P450 monooxygenase mfmF.